The chain runs to 357 residues: DNA replication and repair protein RecF (357 aa).

An ATP-binding site is contributed by 30-37; it reads GANGSGKT.

It belongs to the RecF family.

It is found in the cytoplasm. Functionally, the RecF protein is involved in DNA metabolism; it is required for DNA replication and normal SOS inducibility. RecF binds preferentially to single-stranded, linear DNA. It also seems to bind ATP. The polypeptide is DNA replication and repair protein RecF (Shigella boydii serotype 4 (strain Sb227)).